The following is a 1072-amino-acid chain: DNA-directed RNA polymerase subunit beta (1072 aa).

It belongs to the RNA polymerase beta chain family. In plastids the minimal PEP RNA polymerase catalytic core is composed of four subunits: alpha, beta, beta', and beta''. When a (nuclear-encoded) sigma factor is associated with the core the holoenzyme is formed, which can initiate transcription.

It is found in the plastid. It localises to the chloroplast. The enzyme catalyses RNA(n) + a ribonucleoside 5'-triphosphate = RNA(n+1) + diphosphate. In terms of biological role, DNA-dependent RNA polymerase catalyzes the transcription of DNA into RNA using the four ribonucleoside triphosphates as substrates. The protein is DNA-directed RNA polymerase subunit beta of Lepidium virginicum (Virginia pepperweed).